The sequence spans 1159 residues: VLRYRGIVCDRCGVEVTEKKVRRERMGHIALEVPVAHIWFFRSIPNKIAYLLGIPSKKLDAIIYYERYAVIQPGTVEGLAAGDLLTEEEYLDILDSLPEGNQDLEDDAPEKFIAKIGAEAIYDLLCRVDLDKLSYELRAKASKDSSQQRKKEALKRLQVVESFRASEGYSRPEWMVMKVIPVIPPELHTLVPLDGGRFATSDLNELCRRVIIRNNRLRRLIEQRAPQVILRNEKRMLQEAVDSFFDNSSKAGAVKSDSNRPLKSLTDSLKGKQGRFRQNLLGKRVDYSGRSVIVVGPEPKMHECGLPKYMAAELYKPFVIRKLLERGIVKTVKSARRIVDKKGPEVWDILEHVIKGHPVLLNRAPTLHRLGIQAFQPKLIEGKAIQLHPLACTAFNADFDGDQMAVHLPLSNEAILEAQMLMLASHNILNPANGAPITVPSQDMVLGLYYITKLRKDAKGAGLVFYGREEATIAYNDGKVAIHAPIKVMVDDVDADGNPIRHLVETSVGRLMFNECVPQGVGYINSILGKKALRDIIGHVIKECGIAKTAKFLDDIKDLGYQMAFKGGLSFNLSDVLIPKEKDTLIQEGFAEVDEIMSNYNMGFITNNERYNQIIDTWTHVNTCLSGILMKQLSEDNEGFNSIFMMMDSGARGSKDQINQLSGIRGLMAKPQKSGTEGRTLLENPILSNFKEGLSVLEYFISTHGARKGLSDTALKTAECGYLTRRLVDVSQDVIVTEEDCGTLRGLVTEEIKEGDVVIASLYERILGRVSVHDVIHPNTGEVIVKAGEEINEKAATIIQDSPITNVEIRSVLTCESKKGVCAKCYGRNLSQGHMVHIGEVVGVVAAQSIGEPGTQLTLRTFHTGGIASNIGSEKYVKAKYDGILEIDELRTVDAKDEEGNAYQVVVGRLAEMRVIDENTRMTLITHHIPYGSKLYFKPGDKVKKDDNIFESDPFNAVIIAEETGKLKFEDVVENVTYKVEYDSNVSAGHKEHIIIESKDKNLSPSVSILNSKGDILRTYNLPVGAHFVKSNGDSVKTGDVLVKIPRSTLKGGDITGGLPRVTELFEARNPTNPAIVAEIDGEVSLGRVRRGNREVTITSKLGEERKYLIPLSKQLLIQENDYVRAGMPLSDGAITPADILAIKGPNAVQDYIVNGVQD.

Residues Asp-398, Asp-400, and Asp-402 each coordinate Mg(2+). Zn(2+) contacts are provided by Cys-741, Cys-815, Cys-822, and Cys-825.

Belongs to the RNA polymerase beta' chain family. The RNAP catalytic core consists of 2 alpha, 1 beta, 1 beta' and 1 omega subunit. When a sigma factor is associated with the core the holoenzyme is formed, which can initiate transcription. It depends on Mg(2+) as a cofactor. The cofactor is Zn(2+).

The catalysed reaction is RNA(n) + a ribonucleoside 5'-triphosphate = RNA(n+1) + diphosphate. In terms of biological role, DNA-dependent RNA polymerase catalyzes the transcription of DNA into RNA using the four ribonucleoside triphosphates as substrates. The chain is DNA-directed RNA polymerase subunit beta' from Porphyromonas cangingivalis.